A 355-amino-acid chain; its full sequence is Serum paraoxonase/arylesterase 1 (355 aa).

Cysteines 42 and 353 form a disulfide. E53 and D54 together coordinate Ca(2+). H115 serves as the catalytic Proton acceptor. Residues I117, N168, D169, and N224 each contribute to the Ca(2+) site. A glycan (N-linked (GlcNAc...) asparagine) is linked at N253. Residues D269 and N270 each coordinate Ca(2+). N-linked (GlcNAc...) asparagine glycans are attached at residues N270 and N324.

This sequence belongs to the paraoxonase family. As to quaternary structure, homodimer. Interacts with CLU. Requires Ca(2+) as cofactor. Post-translationally, glycosylated. The signal sequence is not cleaved. Plasma. Associated with HDL.

The protein resides in the secreted. It is found in the extracellular space. The catalysed reaction is a phenyl acetate + H2O = a phenol + acetate + H(+). The enzyme catalyses An aryl dialkyl phosphate + H2O = dialkyl phosphate + an aryl alcohol.. It catalyses the reaction an N-acyl-L-homoserine lactone + H2O = an N-acyl-L-homoserine + H(+). Functionally, hydrolyzes the toxic metabolites of a variety of organophosphorus insecticides. Capable of hydrolyzing a broad spectrum of organophosphate substrates and lactones, and a number of aromatic carboxylic acid esters. Mediates an enzymatic protection of low density lipoproteins against oxidative modification. This chain is Serum paraoxonase/arylesterase 1 (Pon1), found in Rattus norvegicus (Rat).